We begin with the raw amino-acid sequence, 330 residues long: Aspartate--ammonia ligase (330 aa).

This sequence belongs to the class-II aminoacyl-tRNA synthetase family. AsnA subfamily.

Its subcellular location is the cytoplasm. The enzyme catalyses L-aspartate + NH4(+) + ATP = L-asparagine + AMP + diphosphate + H(+). It functions in the pathway amino-acid biosynthesis; L-asparagine biosynthesis; L-asparagine from L-aspartate (ammonia route): step 1/1. This chain is Aspartate--ammonia ligase, found in Escherichia fergusonii (strain ATCC 35469 / DSM 13698 / CCUG 18766 / IAM 14443 / JCM 21226 / LMG 7866 / NBRC 102419 / NCTC 12128 / CDC 0568-73).